We begin with the raw amino-acid sequence, 346 residues long: Holliday junction branch migration complex subunit RuvB (346 aa).

The segment at methionine 1–tyrosine 182 is large ATPase domain (RuvB-L). Residues leucine 21, arginine 22, glycine 63, lysine 66, threonine 67, threonine 68, glutamate 129 to tyrosine 131, arginine 172, tyrosine 182, and arginine 219 each bind ATP. Residue threonine 67 coordinates Mg(2+). Residues threonine 183–glutamate 253 are small ATPAse domain (RuvB-S). A head domain (RuvB-H) region spans residues glycine 256–lysine 346. Residues arginine 311 and arginine 316 each coordinate DNA.

Belongs to the RuvB family. Homohexamer. Forms an RuvA(8)-RuvB(12)-Holliday junction (HJ) complex. HJ DNA is sandwiched between 2 RuvA tetramers; dsDNA enters through RuvA and exits via RuvB. An RuvB hexamer assembles on each DNA strand where it exits the tetramer. Each RuvB hexamer is contacted by two RuvA subunits (via domain III) on 2 adjacent RuvB subunits; this complex drives branch migration. In the full resolvosome a probable DNA-RuvA(4)-RuvB(12)-RuvC(2) complex forms which resolves the HJ.

The protein localises to the cytoplasm. It catalyses the reaction ATP + H2O = ADP + phosphate + H(+). In terms of biological role, the RuvA-RuvB-RuvC complex processes Holliday junction (HJ) DNA during genetic recombination and DNA repair, while the RuvA-RuvB complex plays an important role in the rescue of blocked DNA replication forks via replication fork reversal (RFR). RuvA specifically binds to HJ cruciform DNA, conferring on it an open structure. The RuvB hexamer acts as an ATP-dependent pump, pulling dsDNA into and through the RuvAB complex. RuvB forms 2 homohexamers on either side of HJ DNA bound by 1 or 2 RuvA tetramers; 4 subunits per hexamer contact DNA at a time. Coordinated motions by a converter formed by DNA-disengaged RuvB subunits stimulates ATP hydrolysis and nucleotide exchange. Immobilization of the converter enables RuvB to convert the ATP-contained energy into a lever motion, pulling 2 nucleotides of DNA out of the RuvA tetramer per ATP hydrolyzed, thus driving DNA branch migration. The RuvB motors rotate together with the DNA substrate, which together with the progressing nucleotide cycle form the mechanistic basis for DNA recombination by continuous HJ branch migration. Branch migration allows RuvC to scan DNA until it finds its consensus sequence, where it cleaves and resolves cruciform DNA. This chain is Holliday junction branch migration complex subunit RuvB, found in Clostridium perfringens (strain ATCC 13124 / DSM 756 / JCM 1290 / NCIMB 6125 / NCTC 8237 / Type A).